A 536-amino-acid chain; its full sequence is Alpha-1,3-mannosyl-glycoprotein 4-beta-N-acetylglucosaminyltransferase A (536 aa).

The Cytoplasmic portion of the chain corresponds to methionine 1–glycine 6. The helical; Signal-anchor for type II membrane protein transmembrane segment at threonine 7–tryptophan 27 threads the bilayer. Positions glutamine 28–arginine 54 form a coiled coil. The Lumenal segment spans residues glutamine 28–aspartate 536. Residues asparagine 77 and asparagine 458 are each glycosylated (N-linked (GlcNAc...) asparagine).

This sequence belongs to the glycosyltransferase 54 family. The cofactor is a divalent metal cation. In terms of processing, N-glycosylated.

Its subcellular location is the golgi apparatus membrane. It is found in the secreted. It carries out the reaction N(4)-{beta-D-GlcNAc-(1-&gt;2)-alpha-D-Man-(1-&gt;3)-[beta-D-GlcNAc-(1-&gt;2)-alpha-D-Man-(1-&gt;6)]-beta-D-Man-(1-&gt;4)-beta-D-GlcNAc-(1-&gt;4)-beta-D-GlcNAc}-L-asparaginyl-[protein] + UDP-N-acetyl-alpha-D-glucosamine = N(4)-{beta-D-GlcNAc-(1-&gt;2)-[beta-D-GlcNAc-(1-&gt;4)]-alpha-D-Man-(1-&gt;3)-[beta-D-GlcNAc-(1-&gt;2)-alpha-D-Man-(1-&gt;6)]-beta-D-Man-(1-&gt;4)-beta-D-GlcNAc-(1-&gt;4)-beta-D-GlcNAc}-L-asparaginyl-[protein] + UDP + H(+). The catalysed reaction is an N(4)-{beta-D-GlcNAc-(1-&gt;2)-alpha-D-Man-(1-&gt;3)-[alpha-D-Man-(1-&gt;6)]-beta-D-Man-(1-&gt;4)-beta-D-GlcNAc-(1-&gt;4)-beta-D-GlcNAc}-L-asparaginyl-[protein] + UDP-N-acetyl-alpha-D-glucosamine = an N(4)-{beta-D-GlcNAc-(1-&gt;2)-[beta-D-GlcNAc-(1-&gt;4)]-alpha-D-Man-(1-&gt;3)-[alpha-D-Man-(1-&gt;6)]-beta-D-Man-(1-&gt;4)-beta-D-GlcNAc-(1-&gt;4)-beta-D-GlcNAc}-L-asparaginyl-[protein] + UDP + H(+). It catalyses the reaction an N(4)-{beta-D-GlcNAc-(1-&gt;2)-alpha-D-Man-(1-&gt;3)-[beta-D-GlcNAc-(1-&gt;2)-[beta-D-GlcNAc-(1-&gt;6)]-alpha-D-Man-(1-&gt;6)]-beta-D-Man-(1-&gt;4)-beta-D-GlcNAc-(1-&gt;4)-beta-D-GlcNAc}-L-asparaginyl-[protein] + UDP-N-acetyl-alpha-D-glucosamine = an N(4)-{beta-D-GlcNAc-(1-&gt;2)-[beta-D-GlcNAc-(1-&gt;4)]-alpha-D-Man-(1-&gt;3)-[beta-D-GlcNAc-(1-&gt;2)-[beta-D-GlcNAc-(1-&gt;6)]-alpha-D-Man-(1-&gt;6)]-beta-D-Man-(1-&gt;4)-beta-D-GlcNAc-(1-&gt;4)-beta-D-GlcNAc}-L-asparaginyl-[protein] + UDP + H(+). The enzyme catalyses an N(4)-{beta-D-GlcNAc-(1-&gt;2)-alpha-D-Man-(1-&gt;3)-[beta-D-GlcNAc-(1-&gt;2)-alpha-D-Man-(1-&gt;6)]-beta-D-Man-(1-&gt;4)-beta-D-GlcNAc-(1-&gt;4)-[alpha-L-Fuc-(1-&gt;6)]-beta-D-GlcNAc}-L-asparaginyl-[protein] + UDP-N-acetyl-alpha-D-glucosamine = N(4)-{beta-D-GlcNAc-(1-&gt;2)-[beta-D-GlcNAc-(1-&gt;4)]-alpha-D-Man-(1-&gt;3)-[beta-D-GlcNAc-(1-&gt;2)-alpha-D-Man-(1-&gt;6)]-beta-D-Man-(1-&gt;4)-beta-D-GlcNAc-(1-&gt;4)-[alpha-L-Fuc-(1-&gt;6)]-beta-D-GlcNAc}-asparaginyl-[protein] + UDP + H(+). It carries out the reaction an N(4)-{beta-D-GlcNAc-(1-&gt;2)-alpha-D-Man-(1-&gt;3)-[beta-D-Gal-(1-&gt;4)-beta-D-GlcNAc-(1-&gt;2)-alpha-D-Man-(1-&gt;6)]-beta-D-Man-(1-&gt;4)-beta-D-GlcNAc-(1-&gt;4)-beta-D-GlcNAc}-L-asparaginyl-[protein] + UDP-N-acetyl-alpha-D-glucosamine = an N(4)-{beta-D-GlcNAc-(1-&gt;2)-[beta-D-GlcNAc-(1-&gt;4)]-alpha-D-Man-(1-&gt;3)-[beta-D-Gal-(1-&gt;4)-beta-D-GlcNAc-(1-&gt;2)-alpha-D-Man-(1-&gt;6)]-beta-D-Man-(1-&gt;4)-beta-D-GlcNAc-(1-&gt;4)-beta-D-GlcNAc}-L-asparaginyl-[protein] + UDP + H(+). The catalysed reaction is N(4)-{beta-D-GlcNAc-(1-&gt;2)-alpha-D-Man-(1-&gt;3)-[alpha-D-Man-(1-&gt;3)-{alpha-D-Man-(1-&gt;6)}-alpha-D-Man-(1-&gt;6)]-beta-D-Man-(1-&gt;4)-beta-D-GlcNAc-(1-&gt;4)-beta-D-GlcNAc}-asparaginyl-[protein] + UDP-N-acetyl-alpha-D-glucosamine = N(4)-{beta-D-GlcNAc-(1-&gt;2)-[beta-D-GlcNAc-(1-&gt;4)]-alpha-D-Man-(1-&gt;3)-[alpha-D-Man-(1-&gt;3)-{alpha-D-Man-(1-&gt;6)}-alpha-D-Man-(1-&gt;6)]-beta-D-Man-(1-&gt;4)-beta-D-GlcNAc-(1-&gt;4)-beta-D-GlcNAc}-asparaginyl-[protein] + UDP + H(+). It catalyses the reaction N(4)-{beta-D-GlcNAc-(1-&gt;2)-alpha-D-Man-(1-&gt;3)-beta-D-Man-(1-&gt;4)-beta-D-GlcNAc-(1-&gt;4)-beta-D-GlcNAc}-asparaginyl-[protein] + UDP-N-acetyl-alpha-D-glucosamine = N(4)-{beta-D-GlcNAc-(1-&gt;2)-[beta-D-GlcNAc-(1-&gt;4)]-alpha-D-Man-(1-&gt;3)-beta-D-Man-(1-&gt;4)-beta-D-GlcNAc-(1-&gt;4)-beta-D-GlcNAc}-asparaginyl-[protein] + UDP + H(+). Its pathway is protein modification; protein glycosylation. With respect to regulation, inhibited by UDP. Glycosyltransferase that catalyze the transfer of GlcNAc from UDP-GlcNAc to the GlcNAcbeta1-2Manalpha1-3 arm of the core structure of N-linked glycans through a beta1-4 linkage and participates in the production of tri- and tetra-antennary N-linked sugar chains. Involved in glucose transport by mediating SLC2A2/GLUT2 glycosylation, thereby controlling cell-surface expression of SLC2A2 in pancreatic beta cells. The chain is Alpha-1,3-mannosyl-glycoprotein 4-beta-N-acetylglucosaminyltransferase A from Xenopus tropicalis (Western clawed frog).